The sequence spans 434 residues: Adenylosuccinate synthetase (434 aa).

GTP is bound by residues 22 to 28 and 50 to 52; these read GDEGKGK and GHT. Residue aspartate 23 is the Proton acceptor of the active site. Mg(2+)-binding residues include aspartate 23 and glycine 50. IMP contacts are provided by residues 23–26, 48–51, threonine 139, arginine 153, glutamine 234, threonine 249, and arginine 313; these read DEGK and NAGH. The active-site Proton donor is the histidine 51. 309–315 serves as a coordination point for substrate; the sequence is ATTGRKR. GTP-binding positions include arginine 315, 341–343, and 423–425; these read KLD and SVG.

The protein belongs to the adenylosuccinate synthetase family. As to quaternary structure, homodimer. Mg(2+) serves as cofactor.

It localises to the cytoplasm. It catalyses the reaction IMP + L-aspartate + GTP = N(6)-(1,2-dicarboxyethyl)-AMP + GDP + phosphate + 2 H(+). It participates in purine metabolism; AMP biosynthesis via de novo pathway; AMP from IMP: step 1/2. Its function is as follows. Plays an important role in the de novo pathway of purine nucleotide biosynthesis. Catalyzes the first committed step in the biosynthesis of AMP from IMP. The polypeptide is Adenylosuccinate synthetase (Pelodictyon phaeoclathratiforme (strain DSM 5477 / BU-1)).